We begin with the raw amino-acid sequence, 339 residues long: Phenylalanine--tRNA ligase alpha subunit (339 aa).

Glutamate 253 is a binding site for Mg(2+).

This sequence belongs to the class-II aminoacyl-tRNA synthetase family. Phe-tRNA synthetase alpha subunit type 1 subfamily. As to quaternary structure, tetramer of two alpha and two beta subunits. It depends on Mg(2+) as a cofactor.

Its subcellular location is the cytoplasm. It catalyses the reaction tRNA(Phe) + L-phenylalanine + ATP = L-phenylalanyl-tRNA(Phe) + AMP + diphosphate + H(+). This Geobacter sulfurreducens (strain ATCC 51573 / DSM 12127 / PCA) protein is Phenylalanine--tRNA ligase alpha subunit.